We begin with the raw amino-acid sequence, 447 residues long: Glutamate--tRNA ligase 1 (447 aa).

The short motif at proline 10–asparagine 20 is the 'HIGH' region element. The 'KMSKS' region signature appears at lysine 240 to arginine 244. Lysine 243 serves as a coordination point for ATP.

This sequence belongs to the class-I aminoacyl-tRNA synthetase family. Glutamate--tRNA ligase type 1 subfamily. As to quaternary structure, monomer.

The protein localises to the cytoplasm. The enzyme catalyses tRNA(Glu) + L-glutamate + ATP = L-glutamyl-tRNA(Glu) + AMP + diphosphate. Functionally, catalyzes the attachment of glutamate to tRNA(Glu) in a two-step reaction: glutamate is first activated by ATP to form Glu-AMP and then transferred to the acceptor end of tRNA(Glu). In Rickettsia felis (strain ATCC VR-1525 / URRWXCal2) (Rickettsia azadi), this protein is Glutamate--tRNA ligase 1.